The chain runs to 269 residues: RBPJ-interacting and tubulin-associated protein 1 (269 aa).

A Nuclear export signal motif is present at residues Val5–Leu17. 2 disordered regions span residues Val66 to His105 and Leu141 to Lys269. Positions Cys80–Leu92 are enriched in polar residues. The short motif at Leu92–Ser108 is the Nuclear localization signal element. The interval Arg128–Pro156 is interaction with RBPJ/RBPSUH. Residues Pro156–Lys269 are interaction with tubulin. The segment covering His200–Ser253 has biased composition (polar residues).

It belongs to the RITA family. In terms of assembly, interacts with RBPJ/RBPSUH.

The protein localises to the cytoplasm. It is found in the nucleus. It localises to the cytoskeleton. Its subcellular location is the microtubule organizing center. The protein resides in the centrosome. Functionally, tubulin-binding protein that acts as a negative regulator of Notch signaling pathway. Shuttles between the cytoplasm and the nucleus and mediates the nuclear export of RBPJ/RBPSUH, thereby preventing the interaction between RBPJ/RBPSUH and NICD product of Notch proteins (Notch intracellular domain), leading to down-regulate Notch-mediated transcription. May play a role in neurogenesis. The sequence is that of RBPJ-interacting and tubulin-associated protein 1 (RITA1) from Homo sapiens (Human).